A 208-amino-acid polypeptide reads, in one-letter code: MKLLPSVVLKLFLAAVLSALVTGESLERLRRGLAAATSNPDPPTGTTNQLLPTGADRAQEVQDLEGTDLDLFKVAFSSKPQALATPGKEKNGKKKRKGKGLGKKRDPCLKKYKDYCIHGECRYLKELRIPSCHCLPGYHGQRCHGLTLPVENPLYTYDHTTVLAVVAVVLSSVCLLVIVGLLMFRYHRRGGYDLESEEKVKLGMASSH.

The N-terminal stretch at 1–23 is a signal peptide; it reads MKLLPSVVLKLFLAAVLSALVTG. Residues 24–62 constitute a propeptide that is removed on maturation; sequence ESLERLRRGLAAATSNPDPPTGTTNQLLPTGADRAQEVQ. The Extracellular portion of the chain corresponds to 24–160; the sequence is ESLERLRRGL…ENPLYTYDHT (137 aa). A disordered region spans residues 82–103; that stretch reads ALATPGKEKNGKKKRKGKGLGK. Residue threonine 85 is glycosylated (O-linked (GalNAc...) threonine). Over residues 91-102 the composition is skewed to basic residues; it reads NGKKKRKGKGLG. Residues 104-144 form the EGF-like domain; the sequence is KRDPCLKKYKDYCIHGECRYLKELRIPSCHCLPGYHGQRCH. 3 disulfides stabilise this stretch: cysteine 108-cysteine 121, cysteine 116-cysteine 132, and cysteine 134-cysteine 143. A propeptide spans 149 to 208 (C-terminal); it reads PVENPLYTYDHTTVLAVVAVVLSSVCLLVIVGLLMFRYHRRGGYDLESEEKVKLGMASSH. Residues 161–184 form a helical membrane-spanning segment; that stretch reads TVLAVVAVVLSSVCLLVIVGLLMF. Over 185–208 the chain is Cytoplasmic; sequence RYHRRGGYDLESEEKVKLGMASSH.

As to quaternary structure, interacts with FBLN1. Interacts with EGFR and ERBB4. In terms of processing, O-glycosylated. In terms of tissue distribution, most abundant in skeletal muscle, lung, spleen brain and heart.

It localises to the secreted. Its subcellular location is the extracellular space. It is found in the cell membrane. Its function is as follows. Growth factor that mediates its effects via EGFR, ERBB2 and ERBB4. Required for normal cardiac valve formation and normal heart function. Promotes smooth muscle cell proliferation. May be involved in macrophage-mediated cellular proliferation. It is mitogenic for fibroblasts, but not endothelial cells. It is able to bind EGF receptor/EGFR with higher affinity than EGF itself and is a far more potent mitogen for smooth muscle cells than EGF. Also acts as a diphtheria toxin receptor. This is Proheparin-binding EGF-like growth factor (Hbegf) from Rattus norvegicus (Rat).